Reading from the N-terminus, the 430-residue chain is Na(+)/H(+) antiporter NhaA 2 (430 aa).

10 helical membrane passes run 11–31, 60–80, 97–117, 127–147, 181–201, 215–235, 288–308, 309–329, 356–376, and 393–413; these read FVHGESFAGLLLVGTALIAFI, LSLEHWVNDGLMAVFFLLVGL, VALAVTAALGGMLVPAALYTA, GWGVPMSTDIAFALGVLALLG, LNLTFLTLAALTWGAALYAGW, VLLWFFVLKSGLHATIAGVLL, HALHPFVTFLVLPVFALTNAG, VPVAAGGFGSVSLGVLLGLLL, WGHMVGSGLLAGIGFTMSLFV, and GVLLASVLAALLGAGWLLLGI.

It belongs to the NhaA Na(+)/H(+) (TC 2.A.33) antiporter family.

Its subcellular location is the cell membrane. It catalyses the reaction Na(+)(in) + 2 H(+)(out) = Na(+)(out) + 2 H(+)(in). Its function is as follows. Na(+)/H(+) antiporter that extrudes sodium in exchange for external protons. In Deinococcus geothermalis (strain DSM 11300 / CIP 105573 / AG-3a), this protein is Na(+)/H(+) antiporter NhaA 2.